A 363-amino-acid chain; its full sequence is Spermidine/putrescine import ATP-binding protein PotA 2 (363 aa).

The 231-residue stretch at 6–236 (LEIRNVTRRF…PRSRFVADFI (231 aa)) folds into the ABC transporter domain. Position 38–45 (38–45 (GPSGCGKT)) interacts with ATP.

It belongs to the ABC transporter superfamily. Spermidine/putrescine importer (TC 3.A.1.11.1) family. In terms of assembly, the complex is composed of two ATP-binding proteins (PotA), two transmembrane proteins (PotB and PotC) and a solute-binding protein (PotD).

It is found in the cell inner membrane. It catalyses the reaction ATP + H2O + polyamine-[polyamine-binding protein]Side 1 = ADP + phosphate + polyamineSide 2 + [polyamine-binding protein]Side 1.. Its function is as follows. Part of the ABC transporter complex PotABCD involved in spermidine/putrescine import. Responsible for energy coupling to the transport system. The sequence is that of Spermidine/putrescine import ATP-binding protein PotA 2 from Pseudomonas aeruginosa (strain ATCC 15692 / DSM 22644 / CIP 104116 / JCM 14847 / LMG 12228 / 1C / PRS 101 / PAO1).